The following is a 260-amino-acid chain: Type III pantothenate kinase (260 aa).

Position 6–13 (Asp-6–Val-13) interacts with ATP. Gly-108–Arg-111 serves as a coordination point for substrate. Catalysis depends on Asp-110, which acts as the Proton acceptor. Residue Asp-130 participates in K(+) binding. ATP is bound at residue Thr-133. Thr-187 is a binding site for substrate.

This sequence belongs to the type III pantothenate kinase family. Homodimer. Requires NH4(+) as cofactor. K(+) is required as a cofactor.

Its subcellular location is the cytoplasm. The catalysed reaction is (R)-pantothenate + ATP = (R)-4'-phosphopantothenate + ADP + H(+). It functions in the pathway cofactor biosynthesis; coenzyme A biosynthesis; CoA from (R)-pantothenate: step 1/5. Its function is as follows. Catalyzes the phosphorylation of pantothenate (Pan), the first step in CoA biosynthesis. The chain is Type III pantothenate kinase from Rhizorhabdus wittichii (strain DSM 6014 / CCUG 31198 / JCM 15750 / NBRC 105917 / EY 4224 / RW1) (Sphingomonas wittichii).